Reading from the N-terminus, the 130-residue chain is Small ribosomal subunit protein uS11 (130 aa).

It belongs to the universal ribosomal protein uS11 family. Part of the 30S ribosomal subunit. Interacts with proteins S7 and S18. Binds to IF-3.

In terms of biological role, located on the platform of the 30S subunit, it bridges several disparate RNA helices of the 16S rRNA. Forms part of the Shine-Dalgarno cleft in the 70S ribosome. The polypeptide is Small ribosomal subunit protein uS11 (Dehalococcoides mccartyi (strain ATCC BAA-2100 / JCM 16839 / KCTC 5957 / BAV1)).